We begin with the raw amino-acid sequence, 370 residues long: Erythronate-4-phosphate dehydrogenase (370 aa).

2 residues coordinate substrate: serine 45 and threonine 66. Aspartate 142 and threonine 169 together coordinate NAD(+). Arginine 202 is a catalytic residue. Aspartate 228 contacts NAD(+). Residue glutamate 233 is part of the active site. Histidine 250 functions as the Proton donor in the catalytic mechanism. Glycine 253 provides a ligand contact to NAD(+). Tyrosine 254 is a substrate binding site.

This sequence belongs to the D-isomer specific 2-hydroxyacid dehydrogenase family. PdxB subfamily. In terms of assembly, homodimer.

The protein localises to the cytoplasm. It carries out the reaction 4-phospho-D-erythronate + NAD(+) = (R)-3-hydroxy-2-oxo-4-phosphooxybutanoate + NADH + H(+). Its pathway is cofactor biosynthesis; pyridoxine 5'-phosphate biosynthesis; pyridoxine 5'-phosphate from D-erythrose 4-phosphate: step 2/5. Catalyzes the oxidation of erythronate-4-phosphate to 3-hydroxy-2-oxo-4-phosphonooxybutanoate. In Teredinibacter turnerae (strain ATCC 39867 / T7901), this protein is Erythronate-4-phosphate dehydrogenase.